An 84-amino-acid chain; its full sequence is Small ribosomal subunit protein eS27z (84 aa).

The C4-type zinc-finger motif lies at 39–61; the sequence is CQGCFNITTVFSHSQTVVMCGNC.

Belongs to the eukaryotic ribosomal protein eS27 family. In terms of assembly, (Microbial infection) May interact with Tomato yellow leaf curl virus (TYLCV) and papaya leaf curl China virus (PaLcuCNV) C2 proteins. This interaction prevents activation of Jasmonate signaling, thereby facilitating viral uptake by insects vectors. Zn(2+) serves as cofactor.

The polypeptide is Small ribosomal subunit protein eS27z (RPS27A) (Arabidopsis thaliana (Mouse-ear cress)).